The following is a 419-amino-acid chain: MASGKIAAFRDFSAAAMPNVLRLTDLISEGKLAGKRVFIRADLNVPQDDAGNITEDTRIRASVPAIRAALDAGAAVMVTSHLGRPTEGEFKPEDSLAPVAVRLSELLGCEVKLVQNWVDGVDVAPGQVVLLENCRVNKGEKKNSDELAQKMAKLCDVYVNDAFGTAHRAEATTHGIAKFAPIACAGPLLGAELDALGKALGQPARPLVAIVAGSKVSTKLTILKSLADKVDNLIVGGGIANTFMLAAGLKIGKSLAEADLVGDAKAIIDLMAARGASVPIPVDVVCAKEFSATAAATVKDVKDVADDDMILDIGPKTAAQLADQLKASGTIVWNGPVGVFEFDQFGNGTKVLAEAIAASSGFSIAGGGDTLAAIAKYGIADRVGYISTGGGAFLEFLEGKTLPAVEILEQRAQRQEALA.

Substrate contacts are provided by residues 42–44 (DLN), arginine 58, 81–84 (HLGR), arginine 135, and arginine 168. ATP-binding positions include lysine 219, glutamate 341, and 367–370 (GGDT).

The protein belongs to the phosphoglycerate kinase family. In terms of assembly, monomer.

It is found in the cytoplasm. The enzyme catalyses (2R)-3-phosphoglycerate + ATP = (2R)-3-phospho-glyceroyl phosphate + ADP. It participates in carbohydrate degradation; glycolysis; pyruvate from D-glyceraldehyde 3-phosphate: step 2/5. The sequence is that of Phosphoglycerate kinase from Ralstonia nicotianae (strain ATCC BAA-1114 / GMI1000) (Ralstonia solanacearum).